The sequence spans 937 residues: Outer membrane usher protein CS3-2 (937 aa).

Belongs to the fimbrial export usher family. In terms of processing, a 97 kDa form of the protein is thought to be due to post-translational processing of isoform 104 kDa.

The protein localises to the cell outer membrane. These proteins are essential for the biogenesis of mature CS3 pili, but not for synthesis of the CS3 pilin subunit. This chain is Outer membrane usher protein CS3-2, found in Escherichia coli.